The following is a 419-amino-acid chain: S-adenosylmethionine synthase (419 aa).

His-15 is a binding site for ATP. Mg(2+) is bound at residue Asp-17. Glu-43 provides a ligand contact to K(+). L-methionine is bound by residues Glu-56 and Gln-100. The interval 100–110 is flexible loop; it reads QSPDIAQGVNE. ATP contacts are provided by residues 171–173, 248–249, Asp-257, 263–264, Ala-280, and Lys-284; these read DGK, KF, and RK. Asp-257 provides a ligand contact to L-methionine. L-methionine is bound at residue Lys-288.

The protein belongs to the AdoMet synthase family. In terms of assembly, homotetramer; dimer of dimers. It depends on Mg(2+) as a cofactor. The cofactor is K(+).

Its subcellular location is the cytoplasm. It carries out the reaction L-methionine + ATP + H2O = S-adenosyl-L-methionine + phosphate + diphosphate. It functions in the pathway amino-acid biosynthesis; S-adenosyl-L-methionine biosynthesis; S-adenosyl-L-methionine from L-methionine: step 1/1. Functionally, catalyzes the formation of S-adenosylmethionine (AdoMet) from methionine and ATP. The overall synthetic reaction is composed of two sequential steps, AdoMet formation and the subsequent tripolyphosphate hydrolysis which occurs prior to release of AdoMet from the enzyme. This is S-adenosylmethionine synthase from Prochlorococcus marinus (strain MIT 9303).